We begin with the raw amino-acid sequence, 565 residues long: Transmembrane 7 superfamily member 3 (565 aa).

Positions 1–21 are cleaved as a signal peptide; that stretch reads MWRLRLLVLAVLAAGSAEAQA. N-linked (GlcNAc...) asparagine glycans are attached at residues Asn22, Asn56, Asn70, and Asn259. The next 7 membrane-spanning stretches (helical) occupy residues 287-307, 315-335, 341-361, 364-384, 402-422, 427-447, and 478-498; these read VSTK…CFFG, LFFV…TRLT, VRLA…VASW, FGIL…LVSS, VFWV…MGCL, ILAC…SYMF, and NDYI…TLQI.

The protein resides in the cell membrane. Its function is as follows. Involved in the inhibition of cytokine-induced death of pancreatic beta cells. Involved in the promotion of insulin secretion from pancreatic beta cells. Is a downstream transcriptional target of p53/TP53, and acts as a pro-survival homeostatic factor that attenuates the development of cellular stress. Maintains protein homeostasis and promotes cell survival through attenuation of endoplasmic reticulum (ER) stress and the subsequent induction of unfolded protein response (UPR). The chain is Transmembrane 7 superfamily member 3 (Tm7sf3) from Mus musculus (Mouse).